We begin with the raw amino-acid sequence, 442 residues long: F-box/kelch-repeat protein OR23 (442 aa).

The F-box domain maps to 37–84 (TLIPGLSNDVGRLILSFVPYPHISRIKSTCKSWYAFLSSKTLISLRHS). Kelch repeat units lie at residues 93–139 (LSHL…NFVA), 145–200 (YVYV…AMPG), 204–257 (RIIV…LVEN), 269–328 (EFWV…KIVA), 330–377 (DCGK…ALNG), and 390–437 (LMDT…TTVM).

This chain is F-box/kelch-repeat protein OR23 (OR23), found in Arabidopsis thaliana (Mouse-ear cress).